A 352-amino-acid polypeptide reads, in one-letter code: Selenide, water dikinase (352 aa).

C23 is an active-site residue. Residues K26 and 54 to 56 (SRD) each bind ATP. D57 is a Mg(2+) binding site. Residues D74, D97, and 145–147 (GHS) each bind ATP. Position 97 (D97) interacts with Mg(2+). Position 233 (D233) interacts with Mg(2+).

It belongs to the selenophosphate synthase 1 family. Class I subfamily. In terms of assembly, homodimer. Requires Mg(2+) as cofactor.

It carries out the reaction hydrogenselenide + ATP + H2O = selenophosphate + AMP + phosphate + 2 H(+). Its function is as follows. Synthesizes selenophosphate from selenide and ATP. This chain is Selenide, water dikinase, found in Shewanella putrefaciens (strain CN-32 / ATCC BAA-453).